Reading from the N-terminus, the 605-residue chain is uncharacterized protein (605 aa).

A helical transmembrane segment spans residues 56–78 (ILWSSIAAACVILFAAYKTGAYF).

It is found in the cell membrane. This is an uncharacterized protein from Bacillus subtilis (strain 168).